The chain runs to 182 residues: Peptidoglycan-recognition protein SB2 (182 aa).

An N-terminal signal peptide occupies residues 1 to 17 (MKLQLALVLCGLTLALG). The N-acetylmuramoyl-L-alanine amidase domain maps to 40 to 165 (PVRLIIIHHT…CQTKATACPG (126 aa)). His-47 lines the Zn(2+) pocket. Residues Cys-54 and Cys-60 are joined by a disulfide bond. Residue Asn-149 is glycosylated (N-linked (GlcNAc...) asparagine). Zn(2+) contacts are provided by His-155 and Cys-163.

Belongs to the N-acetylmuramoyl-L-alanine amidase 2 family. It depends on Zn(2+) as a cofactor.

The protein resides in the secreted. It carries out the reaction Hydrolyzes the link between N-acetylmuramoyl residues and L-amino acid residues in certain cell-wall glycopeptides.. In terms of biological role, N-acetylmuramyl-L-alanine amidase involved in innate immunity by degrading bacterial peptidoglycans (PGN). Probably plays a scavenger role by digesting biologically active PGN into biologically inactive fragments. Has no direct bacteriolytic activity. This Drosophila simulans (Fruit fly) protein is Peptidoglycan-recognition protein SB2 (PGRP-SB2).